The following is a 74-amino-acid chain: DNA-directed RNA polymerase subunit omega (74 aa).

This sequence belongs to the RNA polymerase subunit omega family. In terms of assembly, the RNAP catalytic core consists of 2 alpha, 1 beta, 1 beta' and 1 omega subunit. When a sigma factor is associated with the core the holoenzyme is formed, which can initiate transcription.

The enzyme catalyses RNA(n) + a ribonucleoside 5'-triphosphate = RNA(n+1) + diphosphate. Promotes RNA polymerase assembly. Latches the N- and C-terminal regions of the beta' subunit thereby facilitating its interaction with the beta and alpha subunits. This Marinomonas sp. (strain MWYL1) protein is DNA-directed RNA polymerase subunit omega.